A 472-amino-acid chain; its full sequence is Methanethiol oxidase (472 aa).

Belongs to the selenium-binding protein family.

The protein resides in the nucleus. Its subcellular location is the cytoplasm. It localises to the cytosol. The protein localises to the membrane. The catalysed reaction is methanethiol + O2 + H2O = hydrogen sulfide + formaldehyde + H2O2 + H(+). The protein operates within organosulfur degradation. Its function is as follows. Catalyzes the oxidation of methanethiol, an organosulfur compound known to be produced in substantial amounts by gut bacteria. Selenium-binding protein which may be involved in the sensing of reactive xenobiotics in the cytoplasm. May be involved in intra-Golgi protein transport. This is Methanethiol oxidase (selenbp1-a) from Xenopus laevis (African clawed frog).